The chain runs to 347 residues: Two pore potassium channel a (347 aa).

The segment covering 1 to 11 (MDDNSIQQSLL) has biased composition (polar residues). Residues 1–49 (MDDNSIQQSLLADNPNVLQRKPSEGVNRFRRCRSTPSTDPLQGPPEKGS) are disordered. Residues 1–65 (MDDNSIQQSL…LFKEMRPSFR (65 aa)) are Cytoplasmic-facing. Residues 66–86 (LVGLLLFIYLLVGVLAFYAVM) form a helical membrane-spanning segment. The segment at residues 99–118 (DALYFCVVTMTTVGYGDLVP) is an intramembrane region (pore-forming). A helical transmembrane segment spans residues 125-145 (LLACAFVFMGMAVVALFVSKV). At 146-183 (ADYLVEKQEVLFFKALHTNLKGGETKMLRAIETNRIKY) the chain is on the cytoplasmic side. The helical transmembrane segment at 184-204 (KFYTNALLLVLSIISGTVFLW) threads the bilayer. An intramembrane region (pore-forming) is located at residues 213 to 232 (DSFYCVCATITTLGYGDKSF). A helical transmembrane segment spans residues 239-259 (VFAVFWIITSTIIMAQFFMYL). The Cytoplasmic portion of the chain corresponds to 260–347 (AEIYTERRQK…YDLTLAQSAQ (88 aa)). EF-hand domains lie at 276 to 311 (LTRK…ELGK) and 315 to 347 (EEIS…QSAQ). The Ca(2+) site is built by Asp289, Asp291, Asp293, Gln295, Glu300, Asp328, Asp330, Ser332, Thr334, and Asp339.

This sequence belongs to the two pore domain potassium channel (TC 1.A.1.7) family. Homodimer.

The protein resides in the vacuole membrane. In terms of biological role, highly selective inward-rectifying potassium channel that is specifically located in the tonoplast of large vacuoles. Functions independently of the voltage difference across the membrane. The sequence is that of Two pore potassium channel a (TPKA) from Oryza sativa subsp. japonica (Rice).